Consider the following 1021-residue polypeptide: Nonribosomal peptide synthetase asaC (1021 aa).

Residues 17–418 form an adenylation (A) domain region; that stretch reads RHHVRTSPNA…ARADNMVKIR (402 aa). Positions 528 to 603 constitute a Carrier domain; the sequence is KDAGDSVTWL…GLASVIDAGH (76 aa). An O-(pantetheine 4'-phosphoryl)serine modification is found at Ser563. Residues 646–888 form a short-chain dehydrogenase/reductase (R) domain region; it reads LTGATGFLGT…MIPVDFITTA (243 aa).

It belongs to the NRP synthetase family.

It functions in the pathway secondary metabolite biosynthesis. In terms of biological role, nonribosomal peptide synthetase; part of the gene cluster that mediates the biosynthesis of aspergillic acid, a hydroxamic acid-containing pyrazinone with aliphatic side chains that originates from leucine (Leu) and isoleucine (Ile). Aspergillic acid has antibiotic properties and was shown to be lethal to mice. The first step in the pathway is the production of deoxyaspergillic acid via a condensation between the Ile amine and the Leu carboxylic acid, followed by a reductive release from the protein forming the dipeptide aldehyde NH(2)-Leu-Ile-CHO, which could undergo an intermolecular cyclization resulting in a dihydropyrazinone. As the NRPS asaC lacks a condensation domain, it is improbable that it is responsible for condensation of Leu and Ile. One possibility is that asaC acts on a previously condensed dipeptide and functions as a Leu-Ile reductase to yield deoxyaspergillic acid. After asaC forms deoxyaspergillic acid, the cytochrome P450 asaD oxidizes the pyrazinone to the hydroxamic acid-containing bioactive metabolite aspergillic acid. The hydroxylase/desaturase asaB can then convert aspergillic acid to hydroxyaspergillic acid. Both aspergillic acid and hydroxyaspergillic acid can form complexes with iron producing ferriaspergillin analogs. The polypeptide is Nonribosomal peptide synthetase asaC (Aspergillus flavus (strain ATCC 200026 / FGSC A1120 / IAM 13836 / NRRL 3357 / JCM 12722 / SRRC 167)).